The primary structure comprises 398 residues: DNA replication and repair protein RecF (398 aa).

30 to 37 provides a ligand contact to ATP; the sequence is GSNGLGKT.

The protein belongs to the RecF family.

It localises to the cytoplasm. Functionally, the RecF protein is involved in DNA metabolism; it is required for DNA replication and normal SOS inducibility. RecF binds preferentially to single-stranded, linear DNA. It also seems to bind ATP. In Renibacterium salmoninarum (strain ATCC 33209 / DSM 20767 / JCM 11484 / NBRC 15589 / NCIMB 2235), this protein is DNA replication and repair protein RecF.